The sequence spans 939 residues: Protein translocase subunit SecA (939 aa).

ATP contacts are provided by residues Q85, 103 to 107 (GEGKT), and D504. A disordered region spans residues 850 to 939 (PVQDGAERPS…KGGGGRRRKK (90 aa)). The span at 854 to 864 (GAERPSLEKEG) shows a compositional bias: basic and acidic residues. Residues 924–939 (ERRKAQKGGGGRRRKK) show a composition bias toward basic residues.

Belongs to the SecA family. As to quaternary structure, monomer and homodimer. Part of the essential Sec protein translocation apparatus which comprises SecA, SecYEG and auxiliary proteins SecDF. Other proteins may also be involved.

It is found in the cell membrane. The protein resides in the cytoplasm. The catalysed reaction is ATP + H2O + cellular proteinSide 1 = ADP + phosphate + cellular proteinSide 2.. Part of the Sec protein translocase complex. Interacts with the SecYEG preprotein conducting channel. Has a central role in coupling the hydrolysis of ATP to the transfer of proteins into and across the cell membrane, serving as an ATP-driven molecular motor driving the stepwise translocation of polypeptide chains across the membrane. This is Protein translocase subunit SecA from Streptomyces griseus subsp. griseus (strain JCM 4626 / CBS 651.72 / NBRC 13350 / KCC S-0626 / ISP 5235).